We begin with the raw amino-acid sequence, 399 residues long: Glycerate 2-kinase (399 aa).

K48 is a binding site for substrate.

The protein belongs to the glycerate kinase type-1 family. In terms of assembly, homodimer. Requires Mg(2+) as cofactor. The cofactor is Ni(2+). It depends on Mn(2+) as a cofactor. Co(2+) serves as cofactor. Ca(2+) is required as a cofactor. Requires Zn(2+) as cofactor. The cofactor is Sr(2+).

The catalysed reaction is (R)-glycerate + ATP = (2R)-2-phosphoglycerate + ADP + H(+). Functionally, catalyzes the ATP-dependent phosphorylation of D-glycerate to 2-phosphoglycerate. It can also utilize GTP, CTP, UTP, ADP, AMP or pyrophosphate as phosphate donor. The sequence is that of Glycerate 2-kinase (gck) from Sulfurisphaera tokodaii (strain DSM 16993 / JCM 10545 / NBRC 100140 / 7) (Sulfolobus tokodaii).